A 34-amino-acid chain; its full sequence is Endoglucanase 1 (34 aa).

The enzyme catalyses Endohydrolysis of (1-&gt;4)-beta-D-glucosidic linkages in cellulose, lichenin and cereal beta-D-glucans.. This is Endoglucanase 1 from Sclerotinia sclerotiorum (White mold).